We begin with the raw amino-acid sequence, 256 residues long: Chlorophyll a-b binding protein CP24 10B, chloroplastic (256 aa).

A chloroplast-targeting transit peptide spans 1 to 45 (MTTTSATAVLNGLSSSFLTGGKKTQALLGAHVTARVTTPKRFVVA). 2 helical membrane passes run 106 to 126 (WAMA…IPWF) and 134 to 154 (AIAP…MGWV).

The protein belongs to the ELIP/psbS family.

The protein resides in the plastid. It is found in the chloroplast thylakoid membrane. The protein is Chlorophyll a-b binding protein CP24 10B, chloroplastic (CAP10B) of Solanum lycopersicum (Tomato).